Here is a 442-residue protein sequence, read N- to C-terminus: Coiled-coil domain-containing protein 91 (442 aa).

The GGA1-binding motif stretch occupies residues 1–16 (MDDDDFGGFEAAETFD). The tract at residues 1–27 (MDDDDFGGFEAAETFDGEQGGNQAVSP) is disordered. Ser-43 and Ser-46 each carry phosphoserine. Positions 48-79 (ELILDHDRSSPSSGHLRSDAVISSPDDTRADS) are disordered. Coiled-coil stretches lie at residues 127-213 (GVHV…ALSI) and 248-409 (CEEL…RLDQ). Residues 211–414 (LSIIVDEYKA…RRLDQVTRQR (204 aa)) are homodimerization.

Homodimer. Interacts with GGA1, GGA2 and AP1G1.

It is found in the membrane. The protein resides in the golgi apparatus. The protein localises to the trans-Golgi network membrane. It localises to the trans-Golgi network. Involved in the regulation of membrane traffic through the trans-Golgi network (TGN). Functions in close cooperation with the GGAs in the sorting of hydrolases to lysosomes. The sequence is that of Coiled-coil domain-containing protein 91 (Ccdc91) from Rattus norvegicus (Rat).